We begin with the raw amino-acid sequence, 688 residues long: MSRKQFTLFDPVLLKPALWSAVLKLDPRAQWHNPVMMVVWCCCVLLTIVCGVQFAGDSSSEAVFSLGVTAWLWFTLLFANLAEALAEGRSKAQAASLKGLKKTVVAHKLAAAEHDAVSQPVPADSLRKGDYVLVSAGEVIPYDGEVIEGVASVDESAITGESAPVIRESGGDFSAVTGGTRVLSDWLVIGCTVNPGETFLDRMISMVEGAKRRKTPNEIALSILLVALTLVFLLAVVTLMPFSQYSVNSMGHGEPISVTVLVALLVCLIPTTIGGLLSAIGVAGMSRMLAANVIATSGRAVEAAGDIDVLLLDKTGTITLGNRQAAAFLPAPGISEQELASAAQLASLADETPEGRSIVVLAKQRFNLREHDIHALGATFVPFSAQTRMSGVNIHDRMIRKGSVDALRRHVASNQGHFPPEVEKQVEDVAKTGGTPLVVSEGACVLGVVALKDIVKGGIKERFAELRRMGIKTVMITGDNRLTAAAIAAEAGVDDFLAEATPEAKLALIRQYQAEGRLVAMTGDGTNDAPALAQADVAVAMNSGTQAAKEAGNMVDLDSNPTKLIEVVHIGKQMLMTRGSLTTFSLANDLAKYFAILPAAFITTYPQLGALNLMHLSSPQSAILSAVIFNALIIIGLIPLALRGVHYQPRSAKSLLRRNLFFYGLGGVVLPFIGIKVIDLFLTLMGWI.

4 consecutive transmembrane segments (helical) span residues 35–55 (VMMV…VQFA), 62–82 (AVFS…ANLA), 219–239 (IALS…VVTL), and 260–280 (VLVA…LSAI). The active-site 4-aspartylphosphate intermediate is the aspartate 313. Residues aspartate 350, glutamate 354, 383–390 (FSAQTRMS), and lysine 401 contribute to the ATP site. Aspartate 524 and aspartate 528 together coordinate Mg(2+). Helical transmembrane passes span 594–614 (FAIL…LNLM), 622–642 (AILS…PLAL), and 668–688 (VVLP…MGWI).

Belongs to the cation transport ATPase (P-type) (TC 3.A.3) family. Type IA subfamily. In terms of assembly, the system is composed of three essential subunits: KdpA, KdpB and KdpC.

It is found in the cell inner membrane. The catalysed reaction is K(+)(out) + ATP + H2O = K(+)(in) + ADP + phosphate + H(+). Its function is as follows. Part of the high-affinity ATP-driven potassium transport (or Kdp) system, which catalyzes the hydrolysis of ATP coupled with the electrogenic transport of potassium into the cytoplasm. This subunit is responsible for energy coupling to the transport system and for the release of the potassium ions to the cytoplasm. The chain is Potassium-transporting ATPase ATP-binding subunit from Tolumonas auensis (strain DSM 9187 / NBRC 110442 / TA 4).